The sequence spans 186 residues: Low amplitude and bright protein LabA (186 aa).

In terms of biological role, functions in an output pathway of the circadian clock. One of three clock output pathways. Involved in negative feedback regulation of KaiC; deletion leads to overexpression of KaiC protein and decreases the amplitude of the circadian response. Overexpression reduces the expression of circadian genes. The sequence is that of Low amplitude and bright protein LabA from Synechococcus elongatus (strain ATCC 33912 / PCC 7942 / FACHB-805) (Anacystis nidulans R2).